The following is a 181-amino-acid chain: MSSFHATTIFAVQHKGKSAMAGDGQVTFGQAVVMKHTAKKVRRLFGGKVLAGFAGSVADAFTLFEKFETKLEEYGGNLKRAAVELAKEWRSDKMLRQLEAMLIVMNKDSILLVSGTGEVIEPDDGILAIGSGGNYALSAGRALKTHAGDHLTARDIAKAALETAGEICVYTNDQITLEELE.

Ser-2 is a catalytic residue. Na(+) contacts are provided by Gly-165, Cys-168, and Thr-171.

Belongs to the peptidase T1B family. HslV subfamily. A double ring-shaped homohexamer of ClpQ is capped on each side by a ring-shaped ClpY homohexamer. The assembly of the ClpQ/ClpY complex is dependent on binding of ATP.

The protein localises to the cytoplasm. In terms of biological role, protease subunit of a proteasome-like degradation complex. The protein is ATP-dependent protease subunit ClpQ (clpQ) of Bacillus pumilus (strain SAFR-032).